Consider the following 1583-residue polypeptide: Protein mesh (1583 aa).

Residues 1-21 form the signal peptide; sequence MGVKIKLVLAVVLILSANVLG. Over 22–1182 the chain is Extracellular; sequence QDEIVNDTES…EFSQRALFLT (1161 aa). The 156-residue stretch at 260–415 folds into the NIDO domain; that stretch reads GIYFRLDRDL…GRHIFRIDEN (156 aa). An AMOP domain is found at 647–798; it reads GQRWSNSMCN…VGCETFRFER (152 aa). One can recognise a VWFD domain in the interval 811 to 1019; the sequence is GVAGIFGDPH…HWQLTDREQR (209 aa). In terms of domain architecture, Sushi spans 1110–1170; that stretch reads ISCGILETPR…PDYGYTECLR (61 aa). Cystine bridges form between Cys-1112/Cys-1152 and Cys-1138/Cys-1168. Residues 1183 to 1203 traverse the membrane as a helical segment; that stretch reads WGVIVAVILPLGLLICLLWFW. Residues 1204–1472 are Cytoplasmic-facing; the sequence is CWHKPRSEGK…QEYSSRTLGA (269 aa). A compositionally biased stretch (polar residues) spans 1232–1250; it reads LRSSSMGNITDTMKSSTIP. The disordered stretch occupies residues 1232–1448; it reads LRSSSMGNIT…IPEAPKSAPV (217 aa). Over residues 1291 to 1300 the composition is skewed to basic and acidic residues; the sequence is GKSDSGKSDK. Residues 1405–1416 are compositionally biased toward polar residues; that stretch reads PIPSQYSPTYSE. A helical transmembrane segment spans residues 1473–1493; the sequence is TWGIISAVMLPIIIILICVAW. The Extracellular segment spans residues 1494 to 1583; the sequence is RILQRRKAEE…RQWGGETEIN (90 aa). Residues 1521 to 1539 are compositionally biased toward basic and acidic residues; that stretch reads DSVKVTSDDESIPYKKDVT. The disordered stretch occupies residues 1521–1583; the sequence is DSVKVTSDDE…RQWGGETEIN (63 aa).

As to expression, in fifth instar larvae, expressed in midgut epithelial cells (at protein level).

It is found in the membrane. The protein resides in the cell junction. Its subcellular location is the septate junction. The protein localises to the lateral cell membrane. In terms of biological role, may be required for the proper organization of smooth septate junctions and for the barrier function of the midgut epithelium. In Bombyx mori (Silk moth), this protein is Protein mesh.